Reading from the N-terminus, the 873-residue chain is Zinc fingers and homeoboxes protein 1 (873 aa).

Threonine 36 carries the post-translational modification Phosphothreonine. Positions 41–63 (AKAESVSSDEEVHGSVDSDNQQN) are disordered. A phosphoserine mark is found at serine 45, serine 47, and serine 48. A compositionally biased stretch (basic and acidic residues) spans 50–63 (EEVHGSVDSDNQQN). 2 C2H2-type zinc fingers span residues 70-93 (YECK…DSEH) and 102-125 (YVCV…LKYH). A Glycyl lysine isopeptide (Lys-Gly) (interchain with G-Cter in SUMO2) cross-link involves residue lysine 159. The interval 198–247 (VHHNSAEGTSEEKENGVKASQEENAESVSSSALESNTSTSTINRVHPSPA) is disordered. Serine 202 is subject to Phosphoserine. The span at 223 to 238 (ESVSSSALESNTSTST) shows a compositional bias: low complexity. The interval 272–432 (NSNLLPKVLI…QTNVQKSQVP (161 aa)) is required for dimerization. The segment at 272 to 564 (NSNLLPKVLI…SQQKQSWNPF (293 aa)) is required for interaction with NFYA. The segment at residues 284–346 (NSIPTYNAAL…LKHGVSWTPE (63 aa)) is a DNA-binding region (homeobox 1). A disordered region spans residues 429 to 456 (SQVPAAQPATDTKPATAAVPSSPSVRPE). Glycyl lysine isopeptide (Lys-Gly) (interchain with G-Cter in SUMO2) cross-links involve residues lysine 441 and lysine 485. The homeobox 2 DNA-binding region spans 464-526 (SFGIRAKKTK…YNQRNSKSNQ (63 aa)). Disordered regions lie at residues 541–568 (DSSD…PDFA), 627–668 (DEKI…CKKT), and 731–767 (SSSL…KRMN). The segment at residues 569–630 (PQKFKEKTAE…KTKALKDEKI (62 aa)) is a DNA-binding region (homeobox 3). Lysine 629 participates in a covalent cross-link: Glycyl lysine isopeptide (Lys-Gly) (interchain with G-Cter in SUMO2). At serine 648 the chain carries Phosphoserine. Positions 660–722 (GTGKICKKTP…YAWKNGNLKW (63 aa)) form a DNA-binding region, homeobox 4. The interval 734-768 (LNGLSSLRRRGRGRPKGRGRGRPRGRPRGGKRMNT) is required for nuclear localization. Positions 740-764 (LRRRGRGRPKGRGRGRPRGRPRGGK) are enriched in basic residues. Serine 774 is subject to Phosphoserine. The segment at residues 777 to 832 (KFKTGTAILKDYYLKHKFLNEQDLDELVNRSHMGYEQVREWFAERQRRSELGIELF) is a DNA-binding region (homeobox 5). Positions 829-873 (IELFEENEEEDEVVDDQEEDEEETDDSDTWEPPRHVKRKLSKSDD) are disordered. The segment covering 831-857 (LFEENEEEDEVVDDQEEDEEETDDSDT) has biased composition (acidic residues). Positions 831–873 (LFEENEEEDEVVDDQEEDEEETDDSDTWEPPRHVKRKLSKSDD) are required for repressor activity. The segment covering 863 to 873 (HVKRKLSKSDD) has biased composition (basic residues).

This sequence belongs to the ZHX family. In terms of assembly, forms homodimers. Heterodimer (via HD1 domain) with ZHX2 (via HD1 domain). Also forms a heterodimer with ZHX3 which is a prerequisite for repressor activity. Interacts with ATF7IP and NFYA. Interacts (via homeobox domains) with DNMT3B (via PWWP domain). As to expression, widely expressed with highest levels in brain.

Its subcellular location is the nucleus. In terms of biological role, acts as a transcriptional repressor. Increases DNMT3B-mediated repressive transcriptional activity when DNMT3B is tethered to DNA. May link molecule between DNMT3B and other co-repressor proteins. This is Zinc fingers and homeoboxes protein 1 (Zhx1) from Mus musculus (Mouse).